The sequence spans 89 residues: MGRTKKVGPAGRFGPRYGMRIRRRVAEIESVQRQKHECPVCHKRAVKRVGTGIWRCTKCGAEFTGGAYYPETEAQRIVRRAIRKALEEK.

4 residues coordinate Zn(2+): Cys38, Cys41, Cys56, and Cys59. A C4-type zinc finger spans residues 38–59 (CPVCHKRAVKRVGTGIWRCTKC).

This sequence belongs to the eukaryotic ribosomal protein eL43 family. Putative zinc-binding subfamily. In terms of assembly, part of the 50S ribosomal subunit. Requires Zn(2+) as cofactor.

Functionally, binds to the 23S rRNA. This is Large ribosomal subunit protein eL43 from Methanopyrus kandleri (strain AV19 / DSM 6324 / JCM 9639 / NBRC 100938).